The sequence spans 196 residues: Xanthine phosphoribosyltransferase (196 aa).

Leu-26 and Asn-33 together coordinate xanthine. 134–138 (ASGEA) lines the 5-phospho-alpha-D-ribose 1-diphosphate pocket. Position 162 (Lys-162) interacts with xanthine.

The protein belongs to the purine/pyrimidine phosphoribosyltransferase family. Xpt subfamily. In terms of assembly, homodimer.

The protein resides in the cytoplasm. It catalyses the reaction XMP + diphosphate = xanthine + 5-phospho-alpha-D-ribose 1-diphosphate. It functions in the pathway purine metabolism; XMP biosynthesis via salvage pathway; XMP from xanthine: step 1/1. In terms of biological role, converts the preformed base xanthine, a product of nucleic acid breakdown, to xanthosine 5'-monophosphate (XMP), so it can be reused for RNA or DNA synthesis. This is Xanthine phosphoribosyltransferase from Moorella thermoacetica (strain ATCC 39073 / JCM 9320).